The primary structure comprises 298 residues: Inosose dehydratase (298 aa).

Belongs to the IolE/MocC family. Requires glutathione as cofactor. Co(2+) serves as cofactor. Mn(2+) is required as a cofactor.

It carries out the reaction scyllo-inosose = 3D-3,5/4-trihydroxycyclohexane-1,2-dione + H2O. It participates in polyol metabolism; myo-inositol degradation into acetyl-CoA; acetyl-CoA from myo-inositol: step 2/7. Functionally, catalyzes the dehydration of inosose (2-keto-myo-inositol, 2KMI or 2,4,6/3,5-pentahydroxycyclohexanone) to 3D-(3,5/4)-trihydroxycyclohexane-1,2-dione (D-2,3-diketo-4-deoxy-epi-inositol). The chain is Inosose dehydratase from Clostridium tetani (strain Massachusetts / E88).